Here is a 353-residue protein sequence, read N- to C-terminus: UPF0283 membrane protein YcjF (353 aa).

Basic and acidic residues predominate over residues M1 to P19. Residues M1–R35 form a disordered region. 3 helical membrane passes run M70–T90, V100–V120, and E213–W233.

This sequence belongs to the UPF0283 family.

The protein localises to the cell inner membrane. The protein is UPF0283 membrane protein YcjF of Salmonella gallinarum (strain 287/91 / NCTC 13346).